A 706-amino-acid chain; its full sequence is MESGTVLLESKSSPLNLLHEMHELRLLGHLCDVTVSIENQGVHEDFMAHKAVLAATSKFFKEVFLNEKSADGTRTNVYLNEVQAVDFASFLEFVYTAKVRVEEDRVQQMLEVAEKLKCLDLSETCLQLKKQMLESVLLELQNFSESQEVEASSGPQVSVTPSSKASVPGEDAHSNGLVDSSDYPIERLGNGLSPETPSKKCKEKLDKKKDVAKPPFPKIRRASGRLAGKKVFVEIPKKKYTRRLREQQKSAEEAAENDKCPQDQSPDNERMETEPAAKSEACPASVELEESLQKVEGEKEEEEGKDGEEKKKSNFQCTVCDKAFLYEKSFLKHIKYHHGVATEVVYRCDTCGQTFANRCNLKSHQRHVHSSERHFPCEMCAKKFKRKKDVKRHVLQVHEGGGERHRCGQCGKGLSSKTALRLHERTHTGDKPYGCTKCDAKFSQPSALKTHLRVHTGERPFVCDECGARFTQNHMLIYHKRCHTGERPFMCETCGKSFASKEYLKHHNRIHTGSKPFKCEVCLRTFAQRNSLYQHIKVHTGERPYCCDQCGKQFTQVNALQRHHRIHTGEKPYMCNACGRTFTDKSTLRRHTSIHDKNTPWKSFLVIVDGSPKNDEGHKTEQPDDEYASPKLSDRLLSFGENSHFNNLLEVQGNVPAVQENSSTGAACKAVVSQDALLTTSISALGELTPQAVSMPAHLPSLTNME.

In terms of domain architecture, BTB spans 31–103 (CDVTVSIENQ…VYTAKVRVEE (73 aa)). Residues 149-165 (VEASSGPQVSVTPSSKA) are compositionally biased toward polar residues. 2 disordered regions span residues 149-220 (VEAS…PKIR) and 242-308 (RRLR…KDGE). Composition is skewed to basic and acidic residues over residues 197 to 212 (PSKK…KDVA) and 242 to 277 (RRLR…EPAA). 10 C2H2-type zinc fingers span residues 315 to 337 (FQCT…IKYH), 346 to 369 (YRCD…RHVH), 375 to 398 (FPCE…LQVH), 405 to 427 (HRCG…ERTH), 433 to 455 (YGCT…LRVH), 461 to 483 (FVCD…KRCH), 489 to 511 (FMCE…NRIH), 517 to 539 (FKCE…IKVH), 545 to 567 (YCCD…HRIH), and 573 to 595 (YMCN…TSIH). The residue at position 611 (S611) is a Phosphoserine.

It belongs to the krueppel C2H2-type zinc-finger protein family. Interacts with NCL. As to expression, expressed in several tissues, with highest levels in liver. Also expressed in embryos from 7 to 17 dpc.

Its subcellular location is the nucleus. The protein localises to the cytoplasm. It localises to the nucleolus. Its function is as follows. Transcriptional repressor that binds the GZF1 responsive element (GRE) (consensus: 5'-TGCGCN[TG][CA]TATA-3'). May be regulating VSX2/HOX10 expression. This chain is GDNF-inducible zinc finger protein 1, found in Mus musculus (Mouse).